The primary structure comprises 394 residues: Shematrin-like protein 2 (394 aa).

Residues 1 to 19 (MKPFISLASLIVLIASASA) form the signal peptide.

In terms of tissue distribution, prismatic layer of shell (at protein level). Expressed primarily in the mantle with highest level in the mantle edge and lower level in the mantle pallium.

The protein resides in the secreted. This is Shematrin-like protein 2 from Pinctada maxima (Silver-lipped pearl oyster).